The primary structure comprises 326 residues: Probable cell division protein WhiA (326 aa).

A DNA-binding region (H-T-H motif) is located at residues 275 to 308; that stretch reads SLDELGHHADPPMTKDAVAGRIRRLLAMADKKAV.

This sequence belongs to the WhiA family.

Functionally, involved in cell division and chromosome segregation. This is Probable cell division protein WhiA from Clavibacter sepedonicus (Clavibacter michiganensis subsp. sepedonicus).